The chain runs to 74 residues: RNA-binding protein Hfq (74 aa).

Residues 9-69 form the Sm domain; sequence DQFLNQLRKD…ISTFAPEKNV (61 aa).

Belongs to the Hfq family. As to quaternary structure, homohexamer.

In terms of biological role, RNA chaperone that binds small regulatory RNA (sRNAs) and mRNAs to facilitate mRNA translational regulation in response to envelope stress, environmental stress and changes in metabolite concentrations. Also binds with high specificity to tRNAs. This chain is RNA-binding protein Hfq, found in Geobacillus sp. (strain WCH70).